The chain runs to 309 residues: tRNA dimethylallyltransferase (309 aa).

11-18 is a binding site for ATP; it reads GPTATGKS. A substrate-binding site is contributed by 13–18; that stretch reads TATGKS.

It belongs to the IPP transferase family. Monomer. The cofactor is Mg(2+).

It catalyses the reaction adenosine(37) in tRNA + dimethylallyl diphosphate = N(6)-dimethylallyladenosine(37) in tRNA + diphosphate. Catalyzes the transfer of a dimethylallyl group onto the adenine at position 37 in tRNAs that read codons beginning with uridine, leading to the formation of N6-(dimethylallyl)adenosine (i(6)A). The chain is tRNA dimethylallyltransferase from Rhodococcus jostii (strain RHA1).